Reading from the N-terminus, the 335-residue chain is MEGIKFNQIGVSFKGSGSYVPDQILTNETISQKVDTSDEWIKSRTGISERRISGLGDNVNDMAYEAALSAIEMTNWDIKTIDLIVLATSTPHDLFGSAPSIQAKLGAHNAVAFDLTAACSGFLFALITASQFLKGGSFKRAIVIGADQLSSFVDWNDRRSCILFGDGAGALAIEATNEFDNFLGFDMRTDGERGSFLNLPSKNNKDLIIDNIDFLNGGFSPIQMNGQEVYKFAVREVPIILDNLFRKTNYTSDEVDWLILHQANQRILDSVGDRLKIPREKILSNLAKYGNTSAATIPLVMDEAIRNNRIKQNDIIATSGFGAGLSWGAALIKWG.

Catalysis depends on residues Cys-119 and His-261. The tract at residues 262–266 (QANQR) is ACP-binding. Asn-291 is a catalytic residue.

The protein belongs to the thiolase-like superfamily. FabH family. As to quaternary structure, homodimer.

It localises to the cytoplasm. It carries out the reaction malonyl-[ACP] + acetyl-CoA + H(+) = 3-oxobutanoyl-[ACP] + CO2 + CoA. The protein operates within lipid metabolism; fatty acid biosynthesis. Its function is as follows. Catalyzes the condensation reaction of fatty acid synthesis by the addition to an acyl acceptor of two carbons from malonyl-ACP. Catalyzes the first condensation reaction which initiates fatty acid synthesis and may therefore play a role in governing the total rate of fatty acid production. Possesses both acetoacetyl-ACP synthase and acetyl transacylase activities. Its substrate specificity determines the biosynthesis of branched-chain and/or straight-chain of fatty acids. This chain is Beta-ketoacyl-[acyl-carrier-protein] synthase III, found in Prochlorococcus marinus (strain MIT 9312).